Reading from the N-terminus, the 388-residue chain is F-box protein At3g49510 (388 aa).

The F-box domain maps to 1–47 (MTTISDLSDDLVGDILSRVPFTSLISVRSTCKKWNALSKNQIFGRKT).

The polypeptide is F-box protein At3g49510 (Arabidopsis thaliana (Mouse-ear cress)).